A 130-amino-acid polypeptide reads, in one-letter code: Small ribosomal subunit protein uS8 (130 aa).

This sequence belongs to the universal ribosomal protein uS8 family. Part of the 30S ribosomal subunit. Contacts proteins S5 and S12.

Functionally, one of the primary rRNA binding proteins, it binds directly to 16S rRNA central domain where it helps coordinate assembly of the platform of the 30S subunit. This is Small ribosomal subunit protein uS8 from Pseudomonas fluorescens (strain ATCC BAA-477 / NRRL B-23932 / Pf-5).